Consider the following 309-residue polypeptide: Short-chain dehydrogenase/reductase ARMGADRAFT_1018437 (309 aa).

Residues lysine 64, aspartate 86, and asparagine 113 each coordinate NADP(+). The active-site Proton donor is the serine 167. 2 residues coordinate NADP(+): tyrosine 196 and lysine 200. Residue tyrosine 196 is the Proton acceptor of the active site. Residue lysine 200 is the Lowers pKa of active site Tyr of the active site.

The protein belongs to the short-chain dehydrogenases/reductases (SDR) family.

It participates in secondary metabolite biosynthesis. Its function is as follows. Short-chain dehydrogenase/reductase, part of the gene cluster that mediates the biosynthesis of melleolides, a range of antifungal and phytotoxic polyketide derivatives composed of an orsellinic acid (OA) moiety esterified to various sesquiterpene alcohols. The first step in melleolides biosynthesis is performed by the delta(6)-protoilludene synthase PRO1 which catalyzes the cyclization of farnesyl diphosphate to protoilludene. The orsellinic acid synthase armB produces OA by condensing acetyl-CoA with 3 malonyl-CoA units in a three-round chain elongation reaction folowed by a C2-C7 ring closure. ArmB further catalyzes the trans-esterification of OA to the various sesquiterpene alcohols resulting from the hydroxylation of protoilludene. The melleolides cluster also includes 5 cytochrome P450 monooxygenases, 4 NAD(+)-dependent oxidoreductases, one flavin-dependent oxidoreductase, and one O-methyltransferase. The cytochrome P450 monooxygenases may be involved in protoilludene hydroxylation to elaborate melleolides with multiple alcohol groups, such as melleolide D, which carries alcohol functionalities at C-4, C-5, C-10, and C-13. The role of the NAD(+)-dependent enzymes remains unknown. Numerous melleolides, including arnamial, show 5'-O-methylation of the aromatic moiety which may be catalyzed by the methyltransferase encoded in the cluster. The flavin-dependent oxidoreductase might represent the dehydrogenase yielding the aldehyde in position 1 of arnamial and other melleolides. Finally, several halogenase localized outside of the cluster, are able to catalyze the transfer of a single chlorine atom to the melleolide backbone, resulting in a 6'-chloromelleolide product. The chain is Short-chain dehydrogenase/reductase ARMGADRAFT_1018437 from Armillaria gallica (Bulbous honey fungus).